The chain runs to 589 residues: Arginine--tRNA ligase (589 aa).

A 'HIGH' region motif is present at residues 132–142 (PNTNKPLHVGH).

The protein belongs to the class-I aminoacyl-tRNA synthetase family. Monomer.

Its subcellular location is the cytoplasm. The catalysed reaction is tRNA(Arg) + L-arginine + ATP = L-arginyl-tRNA(Arg) + AMP + diphosphate. This is Arginine--tRNA ligase from Treponema pallidum subsp. pallidum (strain SS14).